A 347-amino-acid polypeptide reads, in one-letter code: MSALTPASEVMLRHSDEFIERRVLFAGDLQDALPAQFEAADVRVHTQQYHHWQLLNRAMGDNVQYGLTVDAAFVAECDTLIYYWPKSKQEAQFQLCNILALLPVGTDVFVVGENRSGVRSADQMVEDYATLVKIDSARRCGLYHGRLDTQTEFNLEDWWESYQLHDLEVKTLPGVFSRDGLDVGSSLLLSTLDKHMKGKVLDVGCGAGVMASVLSKLSPKMKLTLSDVNAAAIESSRATLAANGIEGEVIVSNVYSDITGRFDLIISNPPFHDGLQTSLTAAETLIRGALKHLGVGGKLRIVANAFLPYPDILDATFGSHEVLAQNGRFKVYQATVARAPRDAKKKK.

It belongs to the methyltransferase superfamily. RsmC family. Monomer.

The protein localises to the cytoplasm. The catalysed reaction is guanosine(1207) in 16S rRNA + S-adenosyl-L-methionine = N(2)-methylguanosine(1207) in 16S rRNA + S-adenosyl-L-homocysteine + H(+). In terms of biological role, specifically methylates the guanine in position 1207 of 16S rRNA in the 30S particle. In Serratia proteamaculans (strain 568), this protein is Ribosomal RNA small subunit methyltransferase C.